We begin with the raw amino-acid sequence, 81 residues long: Large ribosomal subunit protein bL31B (81 aa).

The protein belongs to the bacterial ribosomal protein bL31 family. Type B subfamily. Part of the 50S ribosomal subunit.

The polypeptide is Large ribosomal subunit protein bL31B (Bdellovibrio bacteriovorus (strain ATCC 15356 / DSM 50701 / NCIMB 9529 / HD100)).